A 416-amino-acid chain; its full sequence is Interleukin-1 receptor type 2 (416 aa).

A signal peptide spans 1-13 (MFILLVLVTGVSA). The Extracellular segment spans residues 14–355 (FTTPAVVHTG…FQSLHTTVKE (342 aa)). Ig-like C2-type domains are found at residues 29 to 136 (PVTS…LELK), 146 to 233 (PLVS…YNIT), and 249 to 357 (PVII…KEVS). Disulfide bonds link Cys42–Cys128, Cys64–Cys120, and Cys164–Cys219. N-linked (GlcNAc...) asparagine glycans are attached at residues Asn124, Asn208, Asn231, and Asn289. A disulfide bridge links Cys270 with Cys338. A helical membrane pass occupies residues 356–381 (VSSTFSWGIALAPLSLIILVVGAIWI). At 382-416 (RRRCKRQAGKTYGLTKLPTDNQDFPSSPNQIKEMK) the chain is on the cytoplasmic side. Residues 396-416 (TKLPTDNQDFPSSPNQIKEMK) are disordered. Residues 399-416 (PTDNQDFPSSPNQIKEMK) show a composition bias toward polar residues.

It belongs to the interleukin-1 receptor family. As to quaternary structure, associates with IL1RAP to form a non-signaling interleukin-1 receptor complex. Post-translationally, a soluble form (sIL1R2) can also be produced by proteolytic cleavage at the cell surface (shedding) involving a metalloproteinase.

It is found in the membrane. The protein localises to the cell membrane. It localises to the secreted. Functionally, non-signaling receptor for IL1A, IL1B and IL1RN. Reduces IL1B activities. Serves as a decoy receptor by competitive binding to IL1B and preventing its binding to IL1R1. Also modulates cellular response through non-signaling association with IL1RAP after binding to IL1B. IL1R2 (membrane and secreted forms) preferentially binds IL1B and poorly IL1A and IL1RN. The secreted IL1R2 recruits secreted IL1RAP with high affinity; this complex formation may be the dominant mechanism for neutralization of IL1B by secreted/soluble receptors. This Rattus norvegicus (Rat) protein is Interleukin-1 receptor type 2 (Il1r2).